Consider the following 412-residue polypeptide: CapZ-interacting protein (412 aa).

Disordered regions lie at residues 1-84 (MEER…KSSP) and 99-412 (ALLP…DTRM). Polar residues predominate over residues 7 to 20 (ETNSNVDSSAQPSV). Phosphoserine occurs at positions 68, 82, 83, 105, 108, 116, 120, and 123. Phosphothreonine is present on Thr-124. Ser-126, Ser-127, Ser-135, and Ser-143 each carry phosphoserine. The span at 159–176 (VRTRGSIKRRPPSRRFRR) shows a compositional bias: basic residues. Phosphoserine is present on residues Ser-177, Ser-179, and Ser-216. Phosphothreonine occurs at positions 243 and 256. Residues 248–258 (EKPEELVRTPE) are compositionally biased toward basic and acidic residues. Ser-297 bears the Phosphoserine mark. Basic and acidic residues-rich tracts occupy residues 298–312 (PREE…DTGK) and 319–330 (SEERVADEDRLG). A phosphoserine mark is found at Ser-333 and Ser-401.

As to quaternary structure, interacts with CAPZA2 and CAPZB. Post-translationally, dephosphorylation results in its dissociation from CAPZA2.

In terms of biological role, stress-induced phosphorylation of CAPZIP may regulate the ability of F-actin-capping protein to remodel actin filament assembly. The polypeptide is CapZ-interacting protein (Rcsd1) (Mus musculus (Mouse)).